Here is a 399-residue protein sequence, read N- to C-terminus: Rho GTPase-activating protein gacC (399 aa).

Over residues 1 to 13 the composition is skewed to basic and acidic residues; it reads MESKDQNVYRKGS. The disordered stretch occupies residues 1–80; that stretch reads MESKDQNVYR…SSSTSTTPVK (80 aa). Residues 14–31 are compositionally biased toward polar residues; the sequence is DNFSKGSNTFFGNLKSIS. The segment covering 61 to 79 has biased composition (low complexity); it reads SVDSSSSNPSSSSTSTTPV. Positions 186 to 375 constitute a Rho-GAP domain; the sequence is VELEESFKTA…NLISFFQQIF (190 aa).

The protein localises to the cytoplasm. Functionally, rho GTPase-activating protein involved in the signal transduction pathway. The chain is Rho GTPase-activating protein gacC (gacC) from Dictyostelium discoideum (Social amoeba).